A 350-amino-acid polypeptide reads, in one-letter code: 3'-hydroxy-N-methyl-(S)-coclaurine 4'-O-methyltransferase (350 aa).

5 residues coordinate S-adenosyl-L-methionine: Gly196, Asp219, Asp239, Met240, and Lys253. Catalysis depends on His257, which acts as the Proton acceptor.

Belongs to the class I-like SAM-binding methyltransferase superfamily. Cation-independent O-methyltransferase family. COMT subfamily. In terms of assembly, homodimer.

The enzyme catalyses (S)-3'-hydroxy-N-methylcoclaurine + S-adenosyl-L-methionine = (S)-reticuline + S-adenosyl-L-homocysteine + H(+). The protein operates within alkaloid biosynthesis; (S)-reticuline biosynthesis; (S)-reticuline from (S)-norcoclaurine: step 4/4. Its function is as follows. Catalyzes the transfer of the methyl group to the 4'-hydroxyl group of 3'-hydroxy-N-methylcoclaurine to form reticuline. In Coptis japonica (Japanese goldthread), this protein is 3'-hydroxy-N-methyl-(S)-coclaurine 4'-O-methyltransferase.